The chain runs to 83 residues: Small ribosomal subunit protein uS17c (83 aa).

The protein belongs to the universal ribosomal protein uS17 family. In terms of assembly, part of the 30S ribosomal subunit.

The protein localises to the plastid. It localises to the chloroplast. Its function is as follows. One of the primary rRNA binding proteins, it binds specifically to the 5'-end of 16S ribosomal RNA. The sequence is that of Small ribosomal subunit protein uS17c (rps17) from Porphyra purpurea (Red seaweed).